The primary structure comprises 202 residues: P25 protein (202 aa).

Residues 7-195 (VAIVIYSTYG…EIARIQGETF (189 aa)) form the Flavodoxin-like domain. S181 bears the Phosphoserine mark.

The protein belongs to the WrbA family. Homodimer.

In terms of biological role, unknown. Target of pap1 transcription factor. Confers brefeldin A resistance in S.pombe. In Schizosaccharomyces pombe (strain 972 / ATCC 24843) (Fission yeast), this protein is P25 protein (obr1).